Reading from the N-terminus, the 91-residue chain is DNA-directed RNA polymerase subunit omega (91 aa).

It belongs to the RNA polymerase subunit omega family. As to quaternary structure, the RNAP catalytic core consists of 2 alpha, 1 beta, 1 beta' and 1 omega subunit. When a sigma factor is associated with the core the holoenzyme is formed, which can initiate transcription.

It carries out the reaction RNA(n) + a ribonucleoside 5'-triphosphate = RNA(n+1) + diphosphate. In terms of biological role, promotes RNA polymerase assembly. Latches the N- and C-terminal regions of the beta' subunit thereby facilitating its interaction with the beta and alpha subunits. This is DNA-directed RNA polymerase subunit omega from Sodalis glossinidius (strain morsitans).